The following is a 791-amino-acid chain: Lon protease (791 aa).

A Lon N-terminal domain is found at 28-223 (LPVVVISEIM…YILQDIQSLL (196 aa)). 374–381 (GPPGVGKT) contributes to the ATP binding site. Positions 610 to 791 (KEKIGSTNGL…SDVFSQVFVV (182 aa)) constitute a Lon proteolytic domain. Residues serine 697 and lysine 740 contribute to the active site.

Belongs to the peptidase S16 family. As to quaternary structure, homohexamer. Organized in a ring with a central cavity.

The protein localises to the cytoplasm. The catalysed reaction is Hydrolysis of proteins in presence of ATP.. Functionally, ATP-dependent serine protease that mediates the selective degradation of mutant and abnormal proteins as well as certain short-lived regulatory proteins. Required for cellular homeostasis and for survival from DNA damage and developmental changes induced by stress. Degrades polypeptides processively to yield small peptide fragments that are 5 to 10 amino acids long. Binds to DNA in a double-stranded, site-specific manner. The polypeptide is Lon protease (Aster yellows witches'-broom phytoplasma (strain AYWB)).